Consider the following 371-residue polypeptide: Protein arginine N-methyltransferase 1 (371 aa).

The region spanning 50-361 is the SAM-dependent MTase PRMT-type domain; sequence KDYYFDSYAH…DLDFKGQLCE (312 aa). Residues His-63, Arg-72, Gly-96, and Glu-118 each coordinate S-adenosyl-L-methionine. Residue Arg-72 participates in S-adenosyl-L-homocysteine binding. Glu-118 provides a ligand contact to S-adenosyl-L-homocysteine. Lys-134 is modified (N6-succinyllysine). Residue Lys-145 forms a Glycyl lysine isopeptide (Lys-Gly) (interchain with G-Cter in ubiquitin) linkage. Residues Val-146 and Glu-147 each coordinate S-adenosyl-L-homocysteine. Position 147 (Glu-147) interacts with S-adenosyl-L-methionine. Catalysis depends on residues Glu-162 and Glu-171. 2 positions are modified to N6-acetyllysine: Lys-228 and Lys-233. A phosphoserine mark is found at Ser-304 and Ser-307.

It belongs to the class I-like SAM-binding methyltransferase superfamily. Protein arginine N-methyltransferase family. Homodimer. Homooctamer; individual homodimers associates to form a homooctamer. Individual homodimers can associate to form a homohexamer. Heterodimer with PRMT8. Interacts with BTG1, BTG2, NFATC2IP and IFNAR1. Interacts with and methylates CHTOP, thereby enabling the interaction of CHTOP with the 5FMC complex. Interacts with ILF3 and SUPT5H. Interacts with and methylates FOXO1, leading to the nuclear retention of FOXO1 and the stimulation of FOXO1 transcriptional activity. Methylation of FOXO1 is increased upon oxidative stress. Interacts with and probably methylates ATXN2L. Component of the methylosome, a 20S complex containing at least CLNS1A/pICln, PRMT5/SKB1, WDR77/MEP50, PRMT1 and ERH. Interacts with DHX9 (via RGG region). Interacts (via N-terminus) with HABP4. Interacts with MAP3K5/ASK1; the interaction results in MAP3K5 methylation by PRMT1 which inhibits MAP3K5 activation. Interacts with TRIM48; the interaction results in ubiquitination of PRMT1 by TRIM48, leading to PRMT1 proteasomal degradation and activation of MAP3K5. Interacts with GATOR1 complex; this interaction is S-adenosyl-L-methionine (SAM) dependent and is perturbated by SAMTOR in a SAM-sensitive manner. Interacts with GFI1; promoting recognition and binding of MRE11 and TP53BP1 substrates by PRMT1. Post-translationally, polyubiquitinated at Lys-145 by the SCF(FBXL17) complex, leading to its subsequent degradation. Ubiquitination is regulated by acetylation at Lys-228 and Lys-233. Polyubiquitinated by E3 ubiquitin-protein ligase TRIM48, leading to suppression of MAP3K5/ASK1 methylation and subsequent MAP3K5 activation. In terms of processing, acetylation at Lys-228 and Lys-233 regulates ubiquitination by the SCF(FBXL17) complex. Acetylated at Lys-233 by p300/EP300. Deacetylated at Lys-228 and Lys-233 by SIRT1. Widely expressed. Expressed strongly in colorectal cancer cells (at protein level). Expressed strongly in colorectal cancer tissues compared to wild-type colon samples (at protein level). Expressed strongly in colorectal cancer tissues compared to wild-type colon samples.

Its subcellular location is the nucleus. The protein resides in the nucleoplasm. It is found in the cytoplasm. The protein localises to the cytosol. It localises to the lysosome membrane. The catalysed reaction is L-arginyl-[protein] + 2 S-adenosyl-L-methionine = N(omega),N(omega)-dimethyl-L-arginyl-[protein] + 2 S-adenosyl-L-homocysteine + 2 H(+). The enzyme catalyses L-arginyl-[protein] + S-adenosyl-L-methionine = N(omega)-methyl-L-arginyl-[protein] + S-adenosyl-L-homocysteine + H(+). It catalyses the reaction N(omega)-methyl-L-arginyl-[protein] + S-adenosyl-L-methionine = N(omega),N(omega)-dimethyl-L-arginyl-[protein] + S-adenosyl-L-homocysteine + H(+). In terms of biological role, arginine methyltransferase that methylates (mono and asymmetric dimethylation) the guanidino nitrogens of arginyl residues present in proteins such as ESR1, histone H2, H3 and H4, FMR1, ILF3, HNRNPA1, HNRNPD, NFATC2IP, SUPT5H, TAF15, EWS, HABP4, SERBP1, RBM15, FOXO1, CHTOP, MAP3K5/ASK1, MICU1 and NPRL2. Constitutes the main enzyme that mediates monomethylation and asymmetric dimethylation of histone H4 'Arg-3' (H4R3me1 and H4R3me2a, respectively), a specific tag for epigenetic transcriptional activation. May be involved in the regulation of TAF15 transcriptional activity, act as an activator of estrogen receptor (ER)-mediated transactivation, play a key role in neurite outgrowth and act as a negative regulator of megakaryocytic differentiation, by modulating p38 MAPK pathway. Methylates RBM15, promoting ubiquitination and degradation of RBM15. Methylates MRE11 and TP53BP1, promoting the DNA damage response. Methylates FOXO1 and retains it in the nucleus increasing its transcriptional activity. Methylates CHTOP and this methylation is critical for its 5-hydroxymethylcytosine (5hmC)-binding activity. Methylates MAP3K5/ASK1 at 'Arg-78' and 'Arg-80' which promotes association of MAP3K5 with thioredoxin and negatively regulates MAP3K5 association with TRAF2, inhibiting MAP3K5 stimulation and MAP3K5-induced activation of JNK. Methylates H4R3 in genes involved in glioblastomagenesis in a CHTOP- and/or TET1-dependent manner. Plays a role in regulating alternative splicing in the heart. Methylates NPRL2 at 'Arg-78' leading to inhibition of its GTPase activator activity and then the GATOR1 complex and consequently inducing timely mTORC1 activation under methionine-sufficient conditions. This chain is Protein arginine N-methyltransferase 1, found in Homo sapiens (Human).